Consider the following 335-residue polypeptide: MVREKIRVSTQTLQWKCVESRTDSKCLHYGRFILSPLMKGQADTIGIAMRRALLGEIEGTCITRAKSEKIPHEYSTILGIQESVHEILMNLKEIVLRSNLYGTCEASICVRGPRGVTAQDIILPPYVEIVDNTQHIASLTEPIDLCIGLQLERNRGYHIKAPNNFQDGSFPIDALFMPVRNVNHSIHSYGNGNEKQEILFLEIWTNGSLTPKEALYEASRNLIDLLIPFLHAEENVNLEDNQHKVSLPLFTFHNRLAEIRKNKKKIALKFIFIDQLELPPRIYNCLKKSNIHTLLDLLNNSQEDLIKMKHFRIEDVKQIFGTLEKHFVIDLKNKR.

The segment at 1–233 (MVREKIRVST…DLLIPFLHAE (233 aa)) is alpha N-terminal domain (alpha-NTD). The tract at residues 263–335 (KKKIALKFIF…HFVIDLKNKR (73 aa)) is alpha C-terminal domain (alpha-CTD).

The protein belongs to the RNA polymerase alpha chain family. In plastids the minimal PEP RNA polymerase catalytic core is composed of four subunits: alpha, beta, beta', and beta''. When a (nuclear-encoded) sigma factor is associated with the core the holoenzyme is formed, which can initiate transcription.

The protein localises to the plastid. The protein resides in the chloroplast. It catalyses the reaction RNA(n) + a ribonucleoside 5'-triphosphate = RNA(n+1) + diphosphate. DNA-dependent RNA polymerase catalyzes the transcription of DNA into RNA using the four ribonucleoside triphosphates as substrates. The protein is DNA-directed RNA polymerase subunit alpha of Spinacia oleracea (Spinach).